The sequence spans 102 residues: Large ribosomal subunit protein bL21 (102 aa).

It belongs to the bacterial ribosomal protein bL21 family. As to quaternary structure, part of the 50S ribosomal subunit. Contacts protein L20.

Functionally, this protein binds to 23S rRNA in the presence of protein L20. The polypeptide is Large ribosomal subunit protein bL21 (Geotalea uraniireducens (strain Rf4) (Geobacter uraniireducens)).